The chain runs to 551 residues: Cytochrome P450 monooxygenase virE (551 aa).

An N-terminal signal peptide occupies residues 1–25 (MPKPWVVFGLGTLVLFLWRLNKIGR). The N-linked (GlcNAc...) asparagine glycan is linked to N392. Residue C439 coordinates heme.

Belongs to the cytochrome P450 family. Heme is required as a cofactor.

It participates in secondary metabolite biosynthesis. In terms of biological role, cytochrome P450 monooxygenase; part of the gene cluster that mediates the biosynthesis of virensols and trichoxide, fungal natural products that contain or are derived from a salicylaldehyde core. The pathway begins with the synthesis of the reduced chain in virensol C by the highly reducing polyketide synthase virA via condensation of one acetate and 8 malonate units. VirA has interesting programming rules since the first 2 ketides are fully reduced, the 3 following ketides undergo beta-dehydration, and the last 3 ketides are only reduced to beta-hydroxys to yield the trihydroxy portion. The production of aldehyde virensol C by virA alone is surprising, since virA does not contain a reductase (R) domain that is typically associated with reductive product release in HRPKS. The cupin-domain enzyme virC is involved in enhancing virA product turnover. The short-chain dehydrogenase virB then oxidizes the C-7 alcohol of virensol C to a ketone, yielding virensol D. Virensol D is further transformed to salicylaldehyde 5-deoxyaurocitrin by the short-chain dehydrogenase virD. VirD catalyzes the dehydrogenation of C-3 to form the beta-ketone aldehyde, which is followed by the generation of the nucleophilic C-2 that is required for the intramolecular aldol condensation between C-2 and C-7, itself followed by dehydration and aromatization which leads to salicylaldehyde 5-deoxyaurocitrin. While the dehydrogenation of virensol D is definitely catalyzed by virD, the aldol condensation and dehydration may be uncatalyzed or assisted by virD. The short chain dehydrogenase virG then converts salicylaldehyde 5-deoxyaurocitrin into virensol B which is further hydroxylated by the cytochrome P450 monooxygenase virE to yield the hydroquinone virensol A. VirI then may oxidize virensol A to form the quinone, while virH performs the epoxidation. Finally, the two remaining short-chain dehydrogenases, virK and virL, are probably responsible for reducing the ketones to the corresponding alcohols to furnish the epoxycyclohexanol structure in trichoxide. This Hypocrea virens (strain Gv29-8 / FGSC 10586) (Gliocladium virens) protein is Cytochrome P450 monooxygenase virE.